We begin with the raw amino-acid sequence, 221 residues long: Growth hormone-releasing peptides (221 aa).

Positions 1 to 25 are cleaved as a signal peptide; the sequence is MHLKIGTLTIRTIMLFTLCTFLTLF. A propeptide spanning residues 26-95 is cleaved from the precursor; the sequence is AFSTCFDETK…QPENEFLQER (70 aa). Residue F107 is modified to Phenylalanine amide. A propeptide spanning residues 110–127 is cleaved from the precursor; it reads TSDDKIAKSIPSFDKIAK. Phenylalanine amide is present on residues F136, F156, and F176. The propeptide occupies 179–221; sequence TPHSDRLQYEMNSHPLELKNPEEDSDRKKRQAMTFRIRTDLQM.

This sequence belongs to the FARP (FMRFamide related peptide) family. In terms of tissue distribution, observed in the suprachiasmatic nucleus and in several telencephalic and diencephalic regions.

The protein localises to the secreted. Functionally, primary role is to release GH from the pituitary. May act as an endogenous ligand in the bullfrog hypothalamo-hypophysial system. The protein is Growth hormone-releasing peptides of Aquarana catesbeiana (American bullfrog).